The primary structure comprises 409 residues: Glycosaminoglycan xylosylkinase (409 aa).

Topologically, residues 1–6 (MKLKQR) are cytoplasmic. The helical; Signal-anchor for type II membrane protein transmembrane segment at 7-25 (VVVLCAVLFLLGLAKVFLL) threads the bilayer. Topologically, residues 26–409 (DGGEGSAASR…IEDRMNLPHP (384 aa)) are lumenal. ATP is bound by residues Gln-107 and Lys-123. Asp-142 contacts Mn(2+). The N-linked (GlcNAc...) asparagine glycan is linked to Asn-193. Disulfide bonds link Cys-196–Cys-211 and Cys-201–Cys-204. 222–225 (TLWL) provides a ligand contact to ATP. Intrachain disulfides connect Cys-257/Cys-331 and Cys-332/Cys-389. Residue Asp-289 is part of the active site. Positions 294 and 309 each coordinate ATP. Asp-309 serves as a coordination point for Mn(2+).

Belongs to the FAM20 family. Requires Mn(2+) as cofactor.

It localises to the golgi apparatus membrane. The enzyme catalyses 3-O-(beta-D-galactosyl-(1-&gt;3)-beta-D-galactosyl-(1-&gt;4)-beta-D-xylosyl)-L-seryl-[protein] + ATP = 3-O-(beta-D-galactosyl-(1-&gt;3)-beta-D-galactosyl-(1-&gt;4)-beta-D-2-O-phosphoxylosyl)-L-seryl-[protein] + ADP + H(+). Its function is as follows. Responsible for the 2-O-phosphorylation of xylose in the glycosaminoglycan-protein linkage region of proteoglycans thereby regulating the amount of mature GAG chains. Sulfated glycosaminoglycans (GAGs), including heparan sulfate and chondroitin sulfate, are synthesized on the so-called common GAG-protein linkage region (GlcUAbeta1-3Galbeta1-3Galbeta1-4Xylbeta1-O-Ser) of core proteins, which is formed by the stepwise addition of monosaccharide residues by the respective specific glycosyltransferases. This is Glycosaminoglycan xylosylkinase from Danio rerio (Zebrafish).